The sequence spans 257 residues: Transmembrane protein C257L (257 aa).

A run of 2 helical transmembrane segments spans residues 123–143 and 163–183; these read LELLGYSPTPLIGGDLMFTAL and IMIFFLIILLCVILGIFYVLV.

The protein belongs to the asfivirus C257R family.

It is found in the host membrane. The protein localises to the virion. This African swine fever virus (isolate Pig/Kenya/KEN-50/1950) (ASFV) protein is Transmembrane protein C257L.